A 506-amino-acid polypeptide reads, in one-letter code: Glutamate--tRNA ligase (506 aa).

A 'HIGH' region motif is present at residues proline 24–leucine 34. The segment at threonine 124–aspartate 147 is disordered. Positions valine 128–aspartate 147 are enriched in basic and acidic residues. A 'KMSKS' region motif is present at residues lysine 268–arginine 272. An ATP-binding site is contributed by lysine 271.

This sequence belongs to the class-I aminoacyl-tRNA synthetase family. Glutamate--tRNA ligase type 1 subfamily. As to quaternary structure, monomer.

The protein localises to the cytoplasm. It catalyses the reaction tRNA(Glu) + L-glutamate + ATP = L-glutamyl-tRNA(Glu) + AMP + diphosphate. Catalyzes the attachment of glutamate to tRNA(Glu) in a two-step reaction: glutamate is first activated by ATP to form Glu-AMP and then transferred to the acceptor end of tRNA(Glu). In Kocuria rhizophila (strain ATCC 9341 / DSM 348 / NBRC 103217 / DC2201), this protein is Glutamate--tRNA ligase.